Reading from the N-terminus, the 198-residue chain is 3-isopropylmalate dehydratase small subunit (198 aa).

This sequence belongs to the LeuD family. LeuD type 1 subfamily. In terms of assembly, heterodimer of LeuC and LeuD.

The enzyme catalyses (2R,3S)-3-isopropylmalate = (2S)-2-isopropylmalate. The protein operates within amino-acid biosynthesis; L-leucine biosynthesis; L-leucine from 3-methyl-2-oxobutanoate: step 2/4. Functionally, catalyzes the isomerization between 2-isopropylmalate and 3-isopropylmalate, via the formation of 2-isopropylmaleate. This chain is 3-isopropylmalate dehydratase small subunit, found in Mycobacterium leprae (strain Br4923).